A 1306-amino-acid polypeptide reads, in one-letter code: Putative late blight resistance protein homolog R1A-10 (1306 aa).

2 coiled-coil regions span residues 407 to 428 (SDSLAFLKNQLQVIQTEFESLQ) and 520 to 542 (PRMKEEIVGFEDVIENLRKKLLS). Positions 521–808 (RMKEEIVGFE…SEAFIKSSEG (288 aa)) constitute an NB-ARC domain. 554 to 561 (GMPGLGKT) lines the ATP pocket. LRR repeat units lie at residues 858–881 (AEENFLLWINRDQITKPSSCVYSH), 921–935 (LSSLHDFSISRILPN), 936–961 (FKFLKVLDLEHRVFIDFIPTELPYLR), 979–1007 (LWNLETLILNRRSADSHNRVLLPSTVWDM), 1010–1035 (LRHLHIPNFSPENKKALLKNSPNLDD), 1057–1081 (TPNLRKLTCKVKCLEYLHQYHALNF), 1082–1106 (PIRLEILKLYRSNAFKAIPFCISAP), 1110–1129 (YLKLSGFYLDSQYLSKTADH), 1130–1153 (LKNLEVLKLYYVEFGDHREWKVSN), 1156–1181 (FPQLKILKLEDVSLMKWIVADDAFPN), and 1216–1240 (ESVVKSAMNIQETQVEDYQNTNFKL). In terms of domain architecture, HMA spans 1240 to 1306 (LVLIEKWPKF…KLRKCGMPGL (67 aa)).

This sequence belongs to the disease resistance NB-LRR family.

The protein resides in the cytoplasm. It is found in the membrane. Its function is as follows. Confers resistance to late blight (Phytophthora infestans) races carrying the avirulence gene Avr1. Resistance proteins guard the plant against pathogens that contain an appropriate avirulence protein via an indirect interaction with this avirulence protein. That triggers a defense system including the hypersensitive response, which restricts the pathogen growth. The protein is Putative late blight resistance protein homolog R1A-10 (R1A-10) of Solanum demissum (Wild potato).